A 159-amino-acid chain; its full sequence is Transcription elongation factor GreA (159 aa).

A coiled-coil region spans residues 44–75 (SENAEYDAAREQQSQTEARIADLESKLSSATI).

The protein belongs to the GreA/GreB family.

Its function is as follows. Necessary for efficient RNA polymerase transcription elongation past template-encoded arresting sites. The arresting sites in DNA have the property of trapping a certain fraction of elongating RNA polymerases that pass through, resulting in locked ternary complexes. Cleavage of the nascent transcript by cleavage factors such as GreA or GreB allows the resumption of elongation from the new 3'terminus. GreA releases sequences of 2 to 3 nucleotides. The sequence is that of Transcription elongation factor GreA from Chlorobium phaeovibrioides (strain DSM 265 / 1930) (Prosthecochloris vibrioformis (strain DSM 265)).